A 331-amino-acid chain; its full sequence is Polysaccharide lyase (331 aa).

The signal sequence occupies residues 1–22; the sequence is MSLPLRLALLPTLLASASAFAA. Residue Cys-23 is the site of N-palmitoyl cysteine attachment. A lipid anchor (S-diacylglycerol cysteine) is attached at Cys-23.

This sequence belongs to the polysaccharide lyase 5 family.

It is found in the cell outer membrane. The enzyme catalyses Eliminative cleavage of alginate to give oligosaccharides with 4-deoxy-alpha-L-erythro-hex-4-enuronosyl groups at their non-reducing ends and beta-D-mannuronate at their reducing end.. The catalysed reaction is [hyaluronan](n) = n 3-(4-deoxy-beta-D-gluc-4-enuronosyl)-N-acetyl-D-glucosamine + H2O. It carries out the reaction Eliminative cleavage of (1-&gt;4)-beta-D-glucuronans to give oligosaccharides with 4-deoxy-beta-D-gluc-4-enuronosyl groups at their non-reducing ends. Complete degradation of glucuronans results in the formation of tetrasaccharides.. Its activity is regulated as follows. Is inhibited by mono- and divalent cations as well as L-ascorbic acid 6-hexadecanoate. Polysaccharide lyase that catalyzes the depolymerization of several anionic polysaccharides via a beta-elimination mechanism. Exhibits broad substrate specificity, catalyzing the degradation of not only alginate and poly-beta-D-mannuronate (poly-ManA), but poly-beta-D-glucuronate (poly-GlcA or poly-GlcUA) and hyaluronate (HA) as well. The oligosaccharide products formed by enzymatic cleavage are comprised mainly of disaccharides, with a lower abundance of trimers and pentamers. Is not active on poly-D-galacturonate, heparin and heparin sulfate. The protein is Polysaccharide lyase of Stenotrophomonas maltophilia (strain K279a).